Reading from the N-terminus, the 1357-residue chain is DNA-directed RNA polymerase subunit beta (1357 aa).

This sequence belongs to the RNA polymerase beta chain family. The RNAP catalytic core consists of 2 alpha, 1 beta, 1 beta' and 1 omega subunit. When a sigma factor is associated with the core the holoenzyme is formed, which can initiate transcription.

It catalyses the reaction RNA(n) + a ribonucleoside 5'-triphosphate = RNA(n+1) + diphosphate. Its function is as follows. DNA-dependent RNA polymerase catalyzes the transcription of DNA into RNA using the four ribonucleoside triphosphates as substrates. The protein is DNA-directed RNA polymerase subunit beta of Pseudomonas putida (Arthrobacter siderocapsulatus).